The following is a 418-amino-acid chain: AP-3 complex subunit mu-2 (418 aa).

Residues 176–417 enclose the MHD domain; it reads NNEAYFDVIE…MTKAGKFQVR (242 aa).

It belongs to the adaptor complexes medium subunit family. As to quaternary structure, AP-3 associates with the BLOC-1 complex. Adaptor protein complex 3 (AP-3) is a heterotetramer composed of two large adaptins (delta-type subunit AP3D1 and beta-type subunit AP3B1 or AP3B2), a medium adaptin (mu-type subunit AP3M1 or AP3M2) and a small adaptin (sigma-type subunit APS1 or AP3S2).

The protein resides in the golgi apparatus. It localises to the cytoplasmic vesicle membrane. Its function is as follows. Part of the AP-3 complex, an adaptor-related complex which is not clathrin-associated. The complex is associated with the Golgi region as well as more peripheral structures. It facilitates the budding of vesicles from the Golgi membrane and may be directly involved in trafficking to lysosomes. In concert with the BLOC-1 complex, AP-3 is required to target cargos into vesicles assembled at cell bodies for delivery into neurites and nerve terminals. This Homo sapiens (Human) protein is AP-3 complex subunit mu-2 (AP3M2).